An 85-amino-acid chain; its full sequence is uncharacterized protein (85 aa).

This is an uncharacterized protein from Lactococcus phage mv4 (Lactococcus delbrueckii bacteriophage mv4).